Reading from the N-terminus, the 455-residue chain is MNRVSASADDRAAGARPARDLVRVAFGPGVVALGIIAAVTLLQLLIANSDMTGAWGAIASMWLGVHLVPISIGGRALGVMPLLPVLLMVWATARSTARATSPQSSGLVVRWVVASALGGPLLMAAIALAVIHDASSVVTELQTPSALRAFTSVLVVHSVGAATGVWSRVGRRALAATALPDWLHDSMRAAAAGVLALLGLSGVVTAGSLVVHWATMQELYGITDSIFGQFSLTVLSVLYAPNVIVGTSAIAVGSSAHIGFATFSSFAVLGGDIPALPILAAAPTPPLGPAWVALLIVGASSGVAVGQQCARRALPFVAAMAKLLVAAVAGALVMAVLGYGGGGRLGNFGDVGVDEGALVLGVLFWFTFVGWVTVVIAGGISRRPKRLRPAPPVELDADESSPPVDMFDGAASEQPPASVAEDVPPSHDDIANGLKAPTADDEALPLSDEPPPRAD.

The next 11 helical transmembrane spans lie at 26-46, 53-73, 77-97, 111-131, 146-166, 191-211, 232-252, 256-276, 278-298, 323-343, and 357-377; these read FGPG…QLLI, GAWG…ISIG, LGVM…RSTA, WVVA…LAVI, ALRA…TGVW, AAGV…SLVV, LTVL…AIAV, AHIG…IPAL, ILAA…LIVG, LLVA…GGGG, and ALVL…VVIA. Residues 384–455 are disordered; it reads PKRLRPAPPV…LSDEPPPRAD (72 aa).

It localises to the cell membrane. This is an uncharacterized protein from Mycobacterium tuberculosis (strain CDC 1551 / Oshkosh).